The chain runs to 112 residues: UPF0060 membrane protein XOO1694 (112 aa).

4 helical membrane-spanning segments follow: residues 8–28, 32–52, 62–82, and 92–112; these read LLLF…PYLW, GGSV…VWLL, VYAA…LWWV, and LLGA…PRSA.

It belongs to the UPF0060 family.

Its subcellular location is the cell inner membrane. The polypeptide is UPF0060 membrane protein XOO1694 (Xanthomonas oryzae pv. oryzae (strain MAFF 311018)).